A 244-amino-acid polypeptide reads, in one-letter code: ATP synthase subunit a (244 aa).

6 helical membrane-spanning segments follow: residues 17–37, 75–95, 112–132, 164–184, 196–216, and 217–237; these read LTNILMITVASVIVLLIAILT, FLALGVTLLMYIFVSNMLGLP, DPAITLTLAVMVVSLTHYYGV, LTLGLRLYGNIFAGEILLGLL, FFLGLVGTVGAIIPMLAWQAF, and SLFIGTIQAFIFTMLTMVYMS.

This sequence belongs to the ATPase A chain family. F-type ATPases have 2 components, CF(1) - the catalytic core - and CF(0) - the membrane proton channel. CF(1) has five subunits: alpha(3), beta(3), gamma(1), delta(1), epsilon(1). CF(0) has three main subunits: a(1), b(2) and c(9-12). The alpha and beta chains form an alternating ring which encloses part of the gamma chain. CF(1) is attached to CF(0) by a central stalk formed by the gamma and epsilon chains, while a peripheral stalk is formed by the delta and b chains.

The protein localises to the cell membrane. Its function is as follows. Key component of the proton channel; it plays a direct role in the translocation of protons across the membrane. The protein is ATP synthase subunit a of Bacillus velezensis (strain DSM 23117 / BGSC 10A6 / LMG 26770 / FZB42) (Bacillus amyloliquefaciens subsp. plantarum).